A 290-amino-acid chain; its full sequence is 4-diphosphocytidyl-2-C-methyl-D-erythritol kinase (290 aa).

Residue K13 is part of the active site. Position 96 to 106 (96 to 106 (PMGGGIGGGSS)) interacts with ATP. Residue D138 is part of the active site.

Belongs to the GHMP kinase family. IspE subfamily.

It catalyses the reaction 4-CDP-2-C-methyl-D-erythritol + ATP = 4-CDP-2-C-methyl-D-erythritol 2-phosphate + ADP + H(+). It functions in the pathway isoprenoid biosynthesis; isopentenyl diphosphate biosynthesis via DXP pathway; isopentenyl diphosphate from 1-deoxy-D-xylulose 5-phosphate: step 3/6. Catalyzes the phosphorylation of the position 2 hydroxy group of 4-diphosphocytidyl-2C-methyl-D-erythritol. This chain is 4-diphosphocytidyl-2-C-methyl-D-erythritol kinase, found in Vibrio vulnificus (strain CMCP6).